Consider the following 268-residue polypeptide: MSSMKIAIAGASGRMGRMLIEAVLAAPDATLAGALDRTGSSQLGQDAGAFLGKQTGVALTDDIERVCAEADYLIDFTRPEGTLAHLDAALRHDVKLVIGTTGFSEPQKAQLRAAGGKIALVFSANMSVGVNVTMKLLEFAAKQFAQGYDIEIIEAHHRHKVDAPSGTALMMGETIAAATGRTLDDCAVYGRHGVTGERDPSTIGFSAIRGGDIVGDHTVLFAGIGERIEITHKSASRVSYAQGALRAARFLAGHQAGFFDMQDVLGLR.

NAD(+) contacts are provided by residues 10-15 (GASGRM) and Asp36. An NADP(+)-binding site is contributed by Arg37. NAD(+) is bound by residues 99-101 (GTT) and 123-126 (SANM). The Proton donor/acceptor role is filled by His156. (S)-2,3,4,5-tetrahydrodipicolinate is bound at residue His157. Lys160 acts as the Proton donor in catalysis. 166 to 167 (GT) provides a ligand contact to (S)-2,3,4,5-tetrahydrodipicolinate.

This sequence belongs to the DapB family.

The protein localises to the cytoplasm. It catalyses the reaction (S)-2,3,4,5-tetrahydrodipicolinate + NAD(+) + H2O = (2S,4S)-4-hydroxy-2,3,4,5-tetrahydrodipicolinate + NADH + H(+). It carries out the reaction (S)-2,3,4,5-tetrahydrodipicolinate + NADP(+) + H2O = (2S,4S)-4-hydroxy-2,3,4,5-tetrahydrodipicolinate + NADPH + H(+). It participates in amino-acid biosynthesis; L-lysine biosynthesis via DAP pathway; (S)-tetrahydrodipicolinate from L-aspartate: step 4/4. Functionally, catalyzes the conversion of 4-hydroxy-tetrahydrodipicolinate (HTPA) to tetrahydrodipicolinate. This Burkholderia mallei (strain NCTC 10247) protein is 4-hydroxy-tetrahydrodipicolinate reductase.